Here is a 69-residue protein sequence, read N- to C-terminus: Sec-independent protein translocase protein TatA (69 aa).

Residues 1–21 (MFGLGGQELILILLIILLLFG) form a helical membrane-spanning segment.

The protein belongs to the TatA/E family. In terms of assembly, forms a complex with TatC.

Its subcellular location is the cell inner membrane. Functionally, part of the twin-arginine translocation (Tat) system that transports large folded proteins containing a characteristic twin-arginine motif in their signal peptide across membranes. TatA could form the protein-conducting channel of the Tat system. This chain is Sec-independent protein translocase protein TatA, found in Pelodictyon phaeoclathratiforme (strain DSM 5477 / BU-1).